We begin with the raw amino-acid sequence, 147 residues long: MADITLISGSTLGGAEYVAEHLAEKLEEAGFTTETLHGPLLEDLPASGIWLVISSTHGAGDIPDNLSPFYEALQEQKPDLSAVRFGAIGIGSREYDTFCGAIDKLEAELKNSGAKQTGETLKINILDHDIPEDPAEEWLGSWVNLLK.

The Flavodoxin-like domain maps to 4–143 (ITLISGSTLG…PAEEWLGSWV (140 aa)).

It belongs to the flavodoxin family. MioC subfamily. Homodimer. It depends on FMN as a cofactor.

Functionally, probable electron transporter required for biotin synthase activity. This is Protein MioC (mioC) from Escherichia coli (strain K12).